The chain runs to 443 residues: Ribulose bisphosphate carboxylase large chain (443 aa).

Substrate contacts are provided by Asn-89 and Thr-139. Residue Lys-141 is the Proton acceptor of the active site. Residue Lys-143 coordinates substrate. Mg(2+) is bound by residues Lys-167, Asp-169, and Glu-170. The residue at position 167 (Lys-167) is an N6-carboxylysine. His-260 (proton acceptor) is an active-site residue. Positions 261, 293, and 345 each coordinate substrate.

It belongs to the RuBisCO large chain family. Type I subfamily. In terms of assembly, heterohexadecamer of 8 large chains and 8 small chains; disulfide-linked. The disulfide link is formed within the large subunit homodimers. The cofactor is Mg(2+). The disulfide bond which can form in the large chain dimeric partners within the hexadecamer appears to be associated with oxidative stress and protein turnover.

It localises to the plastid. It is found in the chloroplast. The catalysed reaction is 2 (2R)-3-phosphoglycerate + 2 H(+) = D-ribulose 1,5-bisphosphate + CO2 + H2O. The enzyme catalyses D-ribulose 1,5-bisphosphate + O2 = 2-phosphoglycolate + (2R)-3-phosphoglycerate + 2 H(+). In terms of biological role, ruBisCO catalyzes two reactions: the carboxylation of D-ribulose 1,5-bisphosphate, the primary event in carbon dioxide fixation, as well as the oxidative fragmentation of the pentose substrate in the photorespiration process. Both reactions occur simultaneously and in competition at the same active site. The protein is Ribulose bisphosphate carboxylase large chain of Buddleja davidii (Butterfly bush).